The chain runs to 110 residues: Large ribosomal subunit protein uL22 (110 aa).

The protein belongs to the universal ribosomal protein uL22 family. In terms of assembly, part of the 50S ribosomal subunit.

Functionally, this protein binds specifically to 23S rRNA; its binding is stimulated by other ribosomal proteins, e.g. L4, L17, and L20. It is important during the early stages of 50S assembly. It makes multiple contacts with different domains of the 23S rRNA in the assembled 50S subunit and ribosome. In terms of biological role, the globular domain of the protein is located near the polypeptide exit tunnel on the outside of the subunit, while an extended beta-hairpin is found that lines the wall of the exit tunnel in the center of the 70S ribosome. The sequence is that of Large ribosomal subunit protein uL22 from Marinomonas sp. (strain MWYL1).